Reading from the N-terminus, the 1354-residue chain is Ubiquitin carboxyl-terminal hydrolase 47 (1354 aa).

Positions E114–D133 are enriched in polar residues. The segment at E114–F139 is disordered. The USP domain occupies V174–K549. The Nucleophile role is filled by C183. Residues D408–N438 form a disordered region. A compositionally biased stretch (polar residues) spans Q416 to N438. Residue H488 is the Proton acceptor of the active site. The segment covering L863 to G882 has biased composition (polar residues). Disordered regions lie at residues L863–K1004 and L1314–K1335. Over residues P920–N930 the composition is skewed to basic and acidic residues. Positions S933–D949 are enriched in low complexity. The segment covering K977–W986 has biased composition (basic and acidic residues). A compositionally biased stretch (acidic residues) spans D987 to D1000.

Belongs to the peptidase C19 family. USP47 subfamily.

Its subcellular location is the cytoplasm. It carries out the reaction Thiol-dependent hydrolysis of ester, thioester, amide, peptide and isopeptide bonds formed by the C-terminal Gly of ubiquitin (a 76-residue protein attached to proteins as an intracellular targeting signal).. Functionally, ubiquitin-specific protease that specifically deubiquitinates monoubiquitinated DNA polymerase beta (polb), stabilizing polb thereby playing a role in base-excision repair (BER). The chain is Ubiquitin carboxyl-terminal hydrolase 47 (usp47) from Xenopus tropicalis (Western clawed frog).